Reading from the N-terminus, the 1442-residue chain is Chitin synthase regulator SKT5 (1442 aa).

2 disordered regions span residues 1 to 54 and 72 to 117; these read MTHP…SPTL and LALK…RHLQ. A compositionally biased stretch (basic and acidic residues) spans 12-25; that stretch reads NGKEPEKEEPRCVH. Residues 39-53 are compositionally biased toward polar residues; it reads KSSSAITNENVSSPT. A compositionally biased stretch (basic and acidic residues) spans 75-99; the sequence is KEPENGKNKHPDSEQDDGDMKEQRS. 7 Sel1-like repeats span residues 198–236, 237–272, 273–309, 313–350, 351–387, 388–425, and 426–461; these read VESQYLAGDCCMNGYGMSKGRPDLGLAYSYFVQAGKRGH, PDAAYRAGTCYEKGWGCRRDPAKAVQFYKMAASRKH, PGAQYRLGTAELNGELGLKRLAREGVKWLKRSAENAT, PHALHELALLHEKGIYNVLFVDNEYSCELLAQAVEMGY, APSAYKLGVNYEYGRMGCPQDSGLSIHMYNIAAQQNH, KEACFALTSWYLVGVPGILPQSDTEAYLWAKRAAEQGL, and AKAEYACGYFCENGIGTPRDLGEAKGWYQRAVEHGD. A disordered region spans residues 550–1402; the sequence is EKPKTATPTS…FSTPDSSSSK (853 aa). Over residues 605-617 the composition is skewed to pro residues; that stretch reads PKPPTPPPPPPPE. A compositionally biased stretch (basic residues) spans 633 to 648; that stretch reads FKSRLLRLGKMGKIRK. Over residues 747-758 the composition is skewed to low complexity; it reads GPSSAAGADGAP. 3 stretches are compositionally biased toward basic and acidic residues: residues 762 to 804, 821 to 840, and 859 to 875; these read GEPK…KSEK, GSDKPGSEDKKNQEVPKPSD, and RPDEKNSSLVERSKDSE. The span at 876 to 891 shows a compositional bias: low complexity; the sequence is STSPSSPKPTTGSAEP. Composition is skewed to pro residues over residues 964-977, 1139-1158, and 1200-1220; these read PFPPGARPGMPPNA, RPGPRPFSPTFPSPAGPSRP, and AMQPGRPPSPSSPFGRPPTGP. Residues 1232 to 1243 show a composition bias toward polar residues; it reads PSQSSMHQSGNG. The span at 1271–1282 shows a compositional bias: pro residues; sequence PRPPRPTSPPPF. Residues 1295 to 1305 show a composition bias toward low complexity; it reads RGVMPPGSGPS. Composition is skewed to pro residues over residues 1306–1322 and 1371–1386; these read MRPPQPPAIIPPPPRSP and DRPPFAPPTHVTPPKT. Positions 1392-1402 are enriched in polar residues; the sequence is GFSTPDSSSSK.

It belongs to the SKT5 family.

The protein resides in the cell membrane. In terms of biological role, activator of the chitin synthase CHS3 which polymerizes chitin, a structural polymer of the fungal cell wall. The protein is Chitin synthase regulator SKT5 of Malassezia restricta (strain ATCC 96810 / NBRC 103918 / CBS 7877) (Seborrheic dermatitis infection agent).